We begin with the raw amino-acid sequence, 193 residues long: Potassium-transporting ATPase KdpC subunit (193 aa).

The helical transmembrane segment at 7 to 27 threads the bilayer; that stretch reads PLIVVFVVLVAVTGLAYPAVM.

The protein belongs to the KdpC family. In terms of assembly, the system is composed of three essential subunits: KdpA, KdpB and KdpC.

The protein resides in the cell inner membrane. Its function is as follows. Part of the high-affinity ATP-driven potassium transport (or Kdp) system, which catalyzes the hydrolysis of ATP coupled with the electrogenic transport of potassium into the cytoplasm. This subunit acts as a catalytic chaperone that increases the ATP-binding affinity of the ATP-hydrolyzing subunit KdpB by the formation of a transient KdpB/KdpC/ATP ternary complex. This Burkholderia mallei (strain NCTC 10247) protein is Potassium-transporting ATPase KdpC subunit.